The sequence spans 536 residues: T-complex protein 1 subunit delta (536 aa).

Residues 1–21 (MAAVAAPMASKPRGSKAESFV) are disordered.

This sequence belongs to the TCP-1 chaperonin family. In terms of assembly, heterooligomeric complex of about 850 to 900 kDa that forms two stacked rings, 12 to 16 nm in diameter.

The protein localises to the cytoplasm. Molecular chaperone; assists the folding of proteins upon ATP hydrolysis. Known to play a role, in vitro, in the folding of actin and tubulin. The polypeptide is T-complex protein 1 subunit delta (Arabidopsis thaliana (Mouse-ear cress)).